A 269-amino-acid polypeptide reads, in one-letter code: Mitochondrial scaffolding protein 1 (269 aa).

The region spanning 49–121 (VVEIEKTSKG…HDEAVEVFRS (73 aa)) is the PDZ domain. Residues 143–185 (RTQTPTASVSITPQVTPQTRSTQNNTDTPKSMSHSESKSRLTS) are disordered. The span at 145–174 (QTPTASVSITPQVTPQTRSTQNNTDTPKSM) shows a compositional bias: polar residues. A helical transmembrane segment spans residues 240–262 (WLTEALYVSIGLGALTISGYLAY).

It is found in the membrane. Functionally, plays a role in the regulation of lifespan in a partially daf-16-mediated manner, and may be involved in regulating the levels of reactive oxygen species production in response to heat stress. This Caenorhabditis elegans protein is Mitochondrial scaffolding protein 1.